We begin with the raw amino-acid sequence, 134 residues long: ATP synthase epsilon chain (134 aa).

Belongs to the ATPase epsilon chain family. F-type ATPases have 2 components, CF(1) - the catalytic core - and CF(0) - the membrane proton channel. CF(1) has five subunits: alpha(3), beta(3), gamma(1), delta(1), epsilon(1). CF(0) has three main subunits: a, b and c. In this bacterium the a and b subunits are transcribed but do not seem to be translated, thus the ATP synthase consists of the alpha, beta, gamma, delta, epsilon and c subunits.

Its subcellular location is the cell membrane. Its function is as follows. Produces ATP from ADP in the presence of a proton gradient across the membrane. In Moorella thermoacetica (strain ATCC 39073 / JCM 9320), this protein is ATP synthase epsilon chain.